Here is a 315-residue protein sequence, read N- to C-terminus: Ribonuclease HII (315 aa).

Residues 78–267 (TLVAGVDEAG…VREALGLAPL (190 aa)) enclose the RNase H type-2 domain. Residues Asp84, Glu85, and Asp176 each contribute to the a divalent metal cation site. A disordered region spans residues 273 to 292 (APPPESAAEPGGEGAIAGIA). Over residues 278 to 292 (SAAEPGGEGAIAGIA) the composition is skewed to low complexity.

This sequence belongs to the RNase HII family. Requires Mn(2+) as cofactor. Mg(2+) serves as cofactor.

Its subcellular location is the cytoplasm. The catalysed reaction is Endonucleolytic cleavage to 5'-phosphomonoester.. In terms of biological role, endonuclease that specifically degrades the RNA of RNA-DNA hybrids. This chain is Ribonuclease HII, found in Anaeromyxobacter sp. (strain Fw109-5).